A 213-amino-acid chain; its full sequence is tRNA (guanine-N(7)-)-methyltransferase (213 aa).

Residues glutamate 38, glutamate 63, aspartate 91, and aspartate 113 each coordinate S-adenosyl-L-methionine. Residue aspartate 113 is part of the active site. Substrate contacts are provided by residues lysine 117, aspartate 149, and 192-195 (TEYE).

Belongs to the class I-like SAM-binding methyltransferase superfamily. TrmB family.

It carries out the reaction guanosine(46) in tRNA + S-adenosyl-L-methionine = N(7)-methylguanosine(46) in tRNA + S-adenosyl-L-homocysteine. It functions in the pathway tRNA modification; N(7)-methylguanine-tRNA biosynthesis. Functionally, catalyzes the formation of N(7)-methylguanine at position 46 (m7G46) in tRNA. This is tRNA (guanine-N(7)-)-methyltransferase from Mycoplasmoides gallisepticum (strain R(low / passage 15 / clone 2)) (Mycoplasma gallisepticum).